We begin with the raw amino-acid sequence, 341 residues long: Tyrosine recombinase XerC (341 aa).

The region spanning 14–105 (PDAAEALERW…GVRSFFRWAD (92 aa)) is the Core-binding (CB) domain. In terms of domain architecture, Tyr recombinase spans 126-309 (PLPRPLAADD…DAEHLLSVYE (184 aa)). Active-site residues include Arg169, Lys193, His261, Arg264, and His287. The active-site O-(3'-phospho-DNA)-tyrosine intermediate is Tyr296.

Belongs to the 'phage' integrase family. XerC subfamily. In terms of assembly, forms a cyclic heterotetrameric complex composed of two molecules of XerC and two molecules of XerD.

The protein resides in the cytoplasm. Site-specific tyrosine recombinase, which acts by catalyzing the cutting and rejoining of the recombining DNA molecules. The XerC-XerD complex is essential to convert dimers of the bacterial chromosome into monomers to permit their segregation at cell division. It also contributes to the segregational stability of plasmids. This chain is Tyrosine recombinase XerC, found in Rhodospirillum centenum (strain ATCC 51521 / SW).